Consider the following 514-residue polypeptide: 2,3-bisphosphoglycerate-independent phosphoglycerate mutase (514 aa).

Mn(2+) is bound by residues D14 and S64. S64 acts as the Phosphoserine intermediate in catalysis. Residues H125, 155–156 (RD), R187, R193, 263–266 (RADR), and K336 contribute to the substrate site. Mn(2+) is bound by residues D403, H407, D444, H445, and H463.

This sequence belongs to the BPG-independent phosphoglycerate mutase family. Monomer. Mn(2+) is required as a cofactor.

The enzyme catalyses (2R)-2-phosphoglycerate = (2R)-3-phosphoglycerate. It functions in the pathway carbohydrate degradation; glycolysis; pyruvate from D-glyceraldehyde 3-phosphate: step 3/5. Catalyzes the interconversion of 2-phosphoglycerate and 3-phosphoglycerate. This chain is 2,3-bisphosphoglycerate-independent phosphoglycerate mutase, found in Escherichia coli O6:H1 (strain CFT073 / ATCC 700928 / UPEC).